We begin with the raw amino-acid sequence, 616 residues long: Dihydroxy-acid dehydratase 1 (616 aa).

Residue Asp81 participates in Mg(2+) binding. Position 122 (Cys122) interacts with [2Fe-2S] cluster. Asp123 and Lys124 together coordinate Mg(2+). Lys124 is modified (N6-carboxylysine). Position 195 (Cys195) interacts with [2Fe-2S] cluster. Glu491 lines the Mg(2+) pocket. Ser517 acts as the Proton acceptor in catalysis.

The protein belongs to the IlvD/Edd family. As to quaternary structure, homodimer. It depends on [2Fe-2S] cluster as a cofactor. Mg(2+) is required as a cofactor.

It carries out the reaction (2R)-2,3-dihydroxy-3-methylbutanoate = 3-methyl-2-oxobutanoate + H2O. The catalysed reaction is (2R,3R)-2,3-dihydroxy-3-methylpentanoate = (S)-3-methyl-2-oxopentanoate + H2O. It participates in amino-acid biosynthesis; L-isoleucine biosynthesis; L-isoleucine from 2-oxobutanoate: step 3/4. Its pathway is amino-acid biosynthesis; L-valine biosynthesis; L-valine from pyruvate: step 3/4. Functions in the biosynthesis of branched-chain amino acids. Catalyzes the dehydration of (2R,3R)-2,3-dihydroxy-3-methylpentanoate (2,3-dihydroxy-3-methylvalerate) into 2-oxo-3-methylpentanoate (2-oxo-3-methylvalerate) and of (2R)-2,3-dihydroxy-3-methylbutanoate (2,3-dihydroxyisovalerate) into 2-oxo-3-methylbutanoate (2-oxoisovalerate), the penultimate precursor to L-isoleucine and L-valine, respectively. This is Dihydroxy-acid dehydratase 1 from Bradyrhizobium diazoefficiens (strain JCM 10833 / BCRC 13528 / IAM 13628 / NBRC 14792 / USDA 110).